The primary structure comprises 153 residues: Ribosomal RNA large subunit methyltransferase H (153 aa).

Residues leucine 70, glycine 102, and 121-126 (LSSMTF) each bind S-adenosyl-L-methionine.

Belongs to the RNA methyltransferase RlmH family. Homodimer.

Its subcellular location is the cytoplasm. The catalysed reaction is pseudouridine(1915) in 23S rRNA + S-adenosyl-L-methionine = N(3)-methylpseudouridine(1915) in 23S rRNA + S-adenosyl-L-homocysteine + H(+). Functionally, specifically methylates the pseudouridine at position 1915 (m3Psi1915) in 23S rRNA. The sequence is that of Ribosomal RNA large subunit methyltransferase H from Dictyoglomus thermophilum (strain ATCC 35947 / DSM 3960 / H-6-12).